The sequence spans 335 residues: UPF0284 protein TK0853 (335 aa).

This sequence belongs to the UPF0284 family.

The sequence is that of UPF0284 protein TK0853 from Thermococcus kodakarensis (strain ATCC BAA-918 / JCM 12380 / KOD1) (Pyrococcus kodakaraensis (strain KOD1)).